A 1444-amino-acid polypeptide reads, in one-letter code: RNA-directed RNA polymerase P1 (1444 aa).

The tract at residues Glu-157–Val-181 is disordered. In terms of domain architecture, RdRp catalytic spans Leu-690–Glu-897.

The protein belongs to the reoviridae RNA-directed RNA polymerase family.

It is found in the virion. Its subcellular location is the host cytoplasm. The enzyme catalyses RNA(n) + a ribonucleoside 5'-triphosphate = RNA(n+1) + diphosphate. RNA-directed RNA polymerase that is involved in both transcription and genome replication. Together with the capping enzyme P5 and protein P7, forms an enzyme complex positioned near the channels situated at each of the five-fold vertices of the core. This is RNA-directed RNA polymerase P1 from Rice dwarf virus (isolate Akita) (RDV).